A 152-amino-acid chain; its full sequence is Psoriasis susceptibility 1 candidate gene 1 protein homolog (152 aa).

Residues 1 to 31 (MTCTDQKSHSQRALGTQTPALQGPQLLNTDP) show a composition bias toward polar residues. Disordered regions lie at residues 1 to 39 (MTCT…TRPP) and 132 to 152 (APTL…SSLI).

The polypeptide is Psoriasis susceptibility 1 candidate gene 1 protein homolog (PSORS1C1) (Pan troglodytes (Chimpanzee)).